Here is a 126-residue protein sequence, read N- to C-terminus: DNA-directed RNA polymerase I subunit RPA12 (126 aa).

Zn(2+) contacts are provided by cysteine 20, cysteine 23, cysteine 38, cysteine 41, cysteine 87, and cysteine 90. Residues 20–41 (CSDCGSVLPLPGAQDTVTCIRC) form a C4-type zinc finger. The segment at 83–123 (VDRRCPRCGHEGMAYHTRQMRSADEGQTVFYTCTNCKFQEK) adopts a TFIIS-type zinc-finger fold. A Hairpin motif is present at residues 106-107 (DE). Zn(2+) contacts are provided by cysteine 115 and cysteine 118.

The protein belongs to the archaeal RpoM/eukaryotic RPA12/RPB9/RPC11 RNA polymerase family. In terms of assembly, component of the RNA polymerase I (Pol I) complex consisting of 13 subunits: a ten-subunit catalytic core composed of POLR1A/RPA1, POLR1B/RPA2, POLR1C/RPAC1, POLR1D/RPAC2, POLR1H/RPA12, POLR2E/RPABC1, POLR2F/RPABC2, POLR2H/RPABC3, POLR2K/RPABC4 and POLR2L/RPABC5; a mobile stalk subunit POLR1F/RPA43 protruding from the core and additional subunits homologous to general transcription factors POLR1E/RPA49 and POLR1G/RPA34. Part of Pol I pre-initiation complex (PIC), in which Pol I core assembles with RRN3 and promoter-bound UTBF and SL1/TIF-IB complex.

It is found in the nucleus. It localises to the nucleolus. Functionally, core component of RNA polymerase I (Pol I), a DNA-dependent RNA polymerase which synthesizes ribosomal RNA precursors using the four ribonucleoside triphosphates as substrates. Can mediate Pol I proofreading of the nascent RNA transcript. Anchors into the Pol I active site to monitor transcription fidelity and cleave mis-incorporated 5'-ribonucleotides. This chain is DNA-directed RNA polymerase I subunit RPA12, found in Homo sapiens (Human).